A 201-amino-acid polypeptide reads, in one-letter code: Recombination protein RecR (201 aa).

A C4-type zinc finger spans residues 59–74 (CEICGNMDTENICRIC). A Toprim domain is found at 82–177 (SIIAIVETVA…KISRLASGIP (96 aa)).

The protein belongs to the RecR family.

Its function is as follows. May play a role in DNA repair. It seems to be involved in an RecBC-independent recombinational process of DNA repair. It may act with RecF and RecO. The chain is Recombination protein RecR from Rickettsia rickettsii (strain Iowa).